The following is a 252-amino-acid chain: 7-carboxy-7-deazaguanine synthase (252 aa).

Residues 22-24 and R37 each bind substrate; that span reads LQG. In terms of domain architecture, Radical SAM core spans 28 to 251; it reads FVGEPQAFVR…QVHKLVDFIP (224 aa). Residues C41, C45, and C48 each coordinate [4Fe-4S] cluster. T102 is a binding site for substrate. G104 provides a ligand contact to S-adenosyl-L-methionine.

It belongs to the radical SAM superfamily. 7-carboxy-7-deazaguanine synthase family. As to quaternary structure, homodimer. [4Fe-4S] cluster serves as cofactor. S-adenosyl-L-methionine is required as a cofactor. It depends on Mg(2+) as a cofactor.

It carries out the reaction 6-carboxy-5,6,7,8-tetrahydropterin + H(+) = 7-carboxy-7-deazaguanine + NH4(+). It participates in purine metabolism; 7-cyano-7-deazaguanine biosynthesis. Its function is as follows. Catalyzes the complex heterocyclic radical-mediated conversion of 6-carboxy-5,6,7,8-tetrahydropterin (CPH4) to 7-carboxy-7-deazaguanine (CDG), a step common to the biosynthetic pathways of all 7-deazapurine-containing compounds. In Methanopyrus kandleri (strain AV19 / DSM 6324 / JCM 9639 / NBRC 100938), this protein is 7-carboxy-7-deazaguanine synthase.